A 451-amino-acid chain; its full sequence is Phosphoglucosamine mutase (451 aa).

The active-site Phosphoserine intermediate is the serine 101. Serine 101, aspartate 240, aspartate 242, and aspartate 244 together coordinate Mg(2+). Serine 101 carries the post-translational modification Phosphoserine.

This sequence belongs to the phosphohexose mutase family. It depends on Mg(2+) as a cofactor. Activated by phosphorylation.

It carries out the reaction alpha-D-glucosamine 1-phosphate = D-glucosamine 6-phosphate. Catalyzes the conversion of glucosamine-6-phosphate to glucosamine-1-phosphate. This chain is Phosphoglucosamine mutase, found in Streptococcus pyogenes serotype M2 (strain MGAS10270).